The primary structure comprises 245 residues: tRNA pseudouridine synthase A (245 aa).

Aspartate 52 (nucleophile) is an active-site residue. Substrate is bound at residue tyrosine 110.

The protein belongs to the tRNA pseudouridine synthase TruA family. In terms of assembly, homodimer.

It carries out the reaction uridine(38/39/40) in tRNA = pseudouridine(38/39/40) in tRNA. In terms of biological role, formation of pseudouridine at positions 38, 39 and 40 in the anticodon stem and loop of transfer RNAs. The chain is tRNA pseudouridine synthase A from Pseudothermotoga lettingae (strain ATCC BAA-301 / DSM 14385 / NBRC 107922 / TMO) (Thermotoga lettingae).